The chain runs to 37 residues: Large ribosomal subunit protein bL36 (37 aa).

Belongs to the bacterial ribosomal protein bL36 family.

The protein is Large ribosomal subunit protein bL36 of Halalkalibacterium halodurans (strain ATCC BAA-125 / DSM 18197 / FERM 7344 / JCM 9153 / C-125) (Bacillus halodurans).